Reading from the N-terminus, the 315-residue chain is Large ribosomal subunit protein uL29m (315 aa).

This sequence belongs to the universal ribosomal protein uL29 family. Component of the mitochondrial large ribosomal subunit. Mature mitochondrial ribosomes consist of a small (37S) and a large (54S) subunit. The 37S subunit contains at least 33 different proteins and 1 molecule of RNA (15S). The 54S subunit contains at least 45 different proteins and 1 molecule of RNA (21S).

It is found in the mitochondrion. The sequence is that of Large ribosomal subunit protein uL29m (MRPL4) from Candida glabrata (strain ATCC 2001 / BCRC 20586 / JCM 3761 / NBRC 0622 / NRRL Y-65 / CBS 138) (Yeast).